Here is a 741-residue protein sequence, read N- to C-terminus: Ethylene receptor (741 aa).

The next 3 membrane-spanning stretches (helical) occupy residues 23-43 (ISDFFIALAYFSIPLELIYFV), 53-73 (WVLVQFGAFIVLCGATHLINL), and 92-112 (VLTAVVSCATALMLVHIIPDL). Cu cation is bound by residues Cys-65 and His-69. Residues 158–307 (DRHTILKTTL…VVADQVAVAL (150 aa)) form the GAF domain. Residues 350-589 (VMNHEMRTPM…TFIVKLGFPE (240 aa)) enclose the Histidine kinase domain. His-353 carries the phosphohistidine; by autocatalysis modification. Positions 615–732 (KVLVMDDNGV…KMRSVLSELL (118 aa)) constitute a Response regulatory domain. Asp-663 carries the post-translational modification 4-aspartylphosphate.

The protein belongs to the ethylene receptor family. Homodimer; disulfide-linked. It depends on Cu cation as a cofactor. Post-translationally, activation probably requires a transfer of a phosphate group between a His in the transmitter domain and an Asp of the receiver domain.

The protein resides in the endoplasmic reticulum membrane. The enzyme catalyses ATP + protein L-histidine = ADP + protein N-phospho-L-histidine.. In terms of biological role, may act early in the ethylene signal transduction pathway, possibly as an ethylene receptor, or as a regulator of the pathway. This chain is Ethylene receptor (ETR1), found in Malus domestica (Apple).